A 671-amino-acid polypeptide reads, in one-letter code: MKSEITNVDVCCVVDELQNLINGRLDKAFLIDNEQNRELILKIHVPEGGSRELVISIGKYKYITLTNYEREKPKLPPSFAMLLRKYLKNAKLIKIEQVNFDRVVIFHFETRDGIYKLVAELFGDGNIIFLNNEDTIIAPLRVERWSTRNIVPKEKYKFPPQKPLNPYNLEFSIAYEVFKDYFLNNKGVECVRLISRVFGIGGLYAEEICERAEIDKKKRDLSEEEIKKLFEASKNLFDEIFNNRKPQIVLKDNEYFDVVPIDLKKYKGLEKKYYNSFLEAVDDYFAKFLTKVVVKKEKSKIEKEIERQENILRRQLETLKKYKEDAEKNQIKGDLIYANYQIVEELLNAIRQAREKMDWARIKKIIRENKEHPILGLIENINENIGEIIIRLKSEVDDKVIEERVSLDIRKNAFENAESYYEKAKKLRNKIEGIENAIELTKKKIEELKKKGEEELKEKESMQMKKKIRKERKWYEKFKWTVINGFLVIAGKDAITNEIIIKKYTDKDDIVFHADIQGAPFTVIKTQGKEVDEETLEEVAKFSVSHSRAWKLGYGAIDTYWVKPEQISKTAESGEYLKRGAFVIRGERHYYRNTPLELGVGVIEYDGDVKITTAPPKTLQKSFIKWVLLKPSNKEKGKVVKELKEIFKDYGIDDEDILRVLPPGGCEIVKK.

Coiled coils occupy residues 291-363 (KVVV…ARIK) and 410-465 (RKNA…MQMK).

Belongs to the NEMF family. In terms of assembly, associates with stalled 50S ribosomal subunits.

Its function is as follows. Probably part of the ribosome quality control system (RQC). May mediate the addition of alanine residues (Ala tailing) to incompletely synthesized nascent chains from stalled ribosomes, leading to their degradation. The chain is Archaeal Rqc2 homolog aRqcH from Methanocaldococcus jannaschii (strain ATCC 43067 / DSM 2661 / JAL-1 / JCM 10045 / NBRC 100440) (Methanococcus jannaschii).